We begin with the raw amino-acid sequence, 335 residues long: Holliday junction branch migration complex subunit RuvB (335 aa).

The tract at residues 1 to 181 (MSERVISPEP…FGLLIRLNLY (181 aa)) is large ATPase domain (RuvB-L). Residues L20, R21, G62, K65, T66, T67, 128–130 (EDF), R171, Y181, and R218 contribute to the ATP site. T66 lines the Mg(2+) pocket. The tract at residues 182-252 (SPEDLEKIVT…IAGAGLALLQ (71 aa)) is small ATPAse domain (RuvB-S). The tract at residues 255 to 335 (ELGLDDIDRR…KLNHSQKTLF (81 aa)) is head domain (RuvB-H). Residues R310 and R315 each contribute to the DNA site.

It belongs to the RuvB family. In terms of assembly, homohexamer. Forms an RuvA(8)-RuvB(12)-Holliday junction (HJ) complex. HJ DNA is sandwiched between 2 RuvA tetramers; dsDNA enters through RuvA and exits via RuvB. An RuvB hexamer assembles on each DNA strand where it exits the tetramer. Each RuvB hexamer is contacted by two RuvA subunits (via domain III) on 2 adjacent RuvB subunits; this complex drives branch migration. In the full resolvosome a probable DNA-RuvA(4)-RuvB(12)-RuvC(2) complex forms which resolves the HJ.

It is found in the cytoplasm. The enzyme catalyses ATP + H2O = ADP + phosphate + H(+). The RuvA-RuvB-RuvC complex processes Holliday junction (HJ) DNA during genetic recombination and DNA repair, while the RuvA-RuvB complex plays an important role in the rescue of blocked DNA replication forks via replication fork reversal (RFR). RuvA specifically binds to HJ cruciform DNA, conferring on it an open structure. The RuvB hexamer acts as an ATP-dependent pump, pulling dsDNA into and through the RuvAB complex. RuvB forms 2 homohexamers on either side of HJ DNA bound by 1 or 2 RuvA tetramers; 4 subunits per hexamer contact DNA at a time. Coordinated motions by a converter formed by DNA-disengaged RuvB subunits stimulates ATP hydrolysis and nucleotide exchange. Immobilization of the converter enables RuvB to convert the ATP-contained energy into a lever motion, pulling 2 nucleotides of DNA out of the RuvA tetramer per ATP hydrolyzed, thus driving DNA branch migration. The RuvB motors rotate together with the DNA substrate, which together with the progressing nucleotide cycle form the mechanistic basis for DNA recombination by continuous HJ branch migration. Branch migration allows RuvC to scan DNA until it finds its consensus sequence, where it cleaves and resolves cruciform DNA. This chain is Holliday junction branch migration complex subunit RuvB, found in Methanoregula boonei (strain DSM 21154 / JCM 14090 / 6A8).